Consider the following 355-residue polypeptide: NADH-quinone oxidoreductase subunit H (355 aa).

The next 8 membrane-spanning stretches (helical) occupy residues 17–37 (IIMVAESVLVLVVLLVAIAYI), 86–106 (GVFLLAPLVSCVLALAAWAVI), 119–139 (VGILFIFAISSLSIYGIIMAG), 165–185 (IGFVIITVLLCAGTLNLSAVV), 204–224 (ILNWYVWPLFPMFVVFYVSAL), 262–282 (YVAIVTMCAMATILFLGGWLP), 291–311 (WVPGIIWFLLKVFFMFFLFAM), and 332–352 (FLPLSLAMVIVVAGVLHFAGI).

It belongs to the complex I subunit 1 family. As to quaternary structure, NDH-1 is composed of 14 different subunits. Subunits NuoA, H, J, K, L, M, N constitute the membrane sector of the complex.

The protein localises to the cell inner membrane. It catalyses the reaction a quinone + NADH + 5 H(+)(in) = a quinol + NAD(+) + 4 H(+)(out). Functionally, NDH-1 shuttles electrons from NADH, via FMN and iron-sulfur (Fe-S) centers, to quinones in the respiratory chain. The immediate electron acceptor for the enzyme in this species is believed to be ubiquinone. Couples the redox reaction to proton translocation (for every two electrons transferred, four hydrogen ions are translocated across the cytoplasmic membrane), and thus conserves the redox energy in a proton gradient. This subunit may bind ubiquinone. The sequence is that of NADH-quinone oxidoreductase subunit H from Bradyrhizobium diazoefficiens (strain JCM 10833 / BCRC 13528 / IAM 13628 / NBRC 14792 / USDA 110).